The chain runs to 188 residues: Probable DNA-directed RNA polymerase subunit delta (188 aa).

An HTH HARE-type domain is found at 14–81 (LSMIEVAHAL…GNNVWALRSW (68 aa)). The segment at 96–188 (EIEDEEEEEK…EDDSDDTDED (93 aa)) is disordered. Composition is skewed to acidic residues over residues 118 to 150 (IEDEIDPEDEEGTKETTEEDMSYDTQAEDEDKD) and 158 to 188 (ELAEVELDNVDEEVDIEVEDDEDDSDDTDED).

The protein belongs to the RpoE family. As to quaternary structure, RNAP is composed of a core of 2 alpha, a beta and a beta' subunits. The core is associated with a delta subunit and one of several sigma factors.

Functionally, participates in both the initiation and recycling phases of transcription. In the presence of the delta subunit, RNAP displays an increased specificity of transcription, a decreased affinity for nucleic acids, and an increased efficiency of RNA synthesis because of enhanced recycling. This is Probable DNA-directed RNA polymerase subunit delta from Lactococcus lactis subsp. cremoris (strain MG1363).